A 673-amino-acid polypeptide reads, in one-letter code: DNA ligase (673 aa).

Residues 33-37 (DSVYD), 82-83 (SL), and Glu-117 contribute to the NAD(+) site. The active-site N6-AMP-lysine intermediate is the Lys-119. Positions 140, 177, 295, and 319 each coordinate NAD(+). Positions 413, 416, 431, and 436 each coordinate Zn(2+). The BRCT domain occupies 595-673 (AVSQVLAGKK…EAELLALDPK (79 aa)).

It belongs to the NAD-dependent DNA ligase family. LigA subfamily. The cofactor is Mg(2+). Mn(2+) is required as a cofactor.

It catalyses the reaction NAD(+) + (deoxyribonucleotide)n-3'-hydroxyl + 5'-phospho-(deoxyribonucleotide)m = (deoxyribonucleotide)n+m + AMP + beta-nicotinamide D-nucleotide.. Functionally, DNA ligase that catalyzes the formation of phosphodiester linkages between 5'-phosphoryl and 3'-hydroxyl groups in double-stranded DNA using NAD as a coenzyme and as the energy source for the reaction. It is essential for DNA replication and repair of damaged DNA. This is DNA ligase from Synechococcus sp. (strain JA-3-3Ab) (Cyanobacteria bacterium Yellowstone A-Prime).